We begin with the raw amino-acid sequence, 466 residues long: Phosphomethylpyrimidine synthase (466 aa).

Residues N80, M109, Y139, H175, 195 to 197, 236 to 239, and E275 contribute to the substrate site; these read SRG and DSLR. H279 is a binding site for Zn(2+). Position 302 (Y302) interacts with substrate. H343 is a binding site for Zn(2+). [4Fe-4S] cluster is bound by residues C423, C426, and C431.

It belongs to the ThiC family. The cofactor is [4Fe-4S] cluster.

The enzyme catalyses 5-amino-1-(5-phospho-beta-D-ribosyl)imidazole + S-adenosyl-L-methionine = 4-amino-2-methyl-5-(phosphooxymethyl)pyrimidine + CO + 5'-deoxyadenosine + formate + L-methionine + 3 H(+). The protein operates within cofactor biosynthesis; thiamine diphosphate biosynthesis. Functionally, catalyzes the synthesis of the hydroxymethylpyrimidine phosphate (HMP-P) moiety of thiamine from aminoimidazole ribotide (AIR) in a radical S-adenosyl-L-methionine (SAM)-dependent reaction. This chain is Phosphomethylpyrimidine synthase, found in Prochlorococcus marinus (strain NATL1A).